Reading from the N-terminus, the 321-residue chain is Phospho-N-acetylmuramoyl-pentapeptide-transferase (321 aa).

Helical transmembrane passes span 6–26, 54–74, 77–97, 117–137, 143–163, 175–195, 200–220, 226–246, 251–271, and 301–321; these read IFIP…LFIG, MGGV…GLFF, FTPS…LGYL, LIGQ…EGFS, FGVA…FWLV, IDGL…IIAW, FDVV…FPYN, IFMG…ISII, WTLL…ILQV, and IDFV…WILF.

It belongs to the glycosyltransferase 4 family. MraY subfamily. Requires Mg(2+) as cofactor.

It localises to the cell membrane. The catalysed reaction is UDP-N-acetyl-alpha-D-muramoyl-L-alanyl-gamma-D-glutamyl-L-lysyl-D-alanyl-D-alanine + di-trans,octa-cis-undecaprenyl phosphate = Mur2Ac(oyl-L-Ala-gamma-D-Glu-L-Lys-D-Ala-D-Ala)-di-trans,octa-cis-undecaprenyl diphosphate + UMP. Its pathway is cell wall biogenesis; peptidoglycan biosynthesis. In terms of biological role, catalyzes the initial step of the lipid cycle reactions in the biosynthesis of the cell wall peptidoglycan: transfers peptidoglycan precursor phospho-MurNAc-pentapeptide from UDP-MurNAc-pentapeptide onto the lipid carrier undecaprenyl phosphate, yielding undecaprenyl-pyrophosphoryl-MurNAc-pentapeptide, known as lipid I. In Enterococcus faecalis (strain ATCC 700802 / V583), this protein is Phospho-N-acetylmuramoyl-pentapeptide-transferase.